The chain runs to 813 residues: Probable E3 ubiquitin-protein ligase hulA (813 aa).

The region spanning 1–109 (MGSNLPAQPN…QMGGDEMLTR (109 aa)) is the C2 domain. Disordered stretches follow at residues 131–235 (NLST…GWER) and 251–351 (RTTT…YFVD). The segment covering 148–167 (VQSSTSSGLVPQVAPSSSHP) has biased composition (polar residues). Residues 188-215 (RVPSTTRPSSTAAPASAAGAAVSNSHGS) are compositionally biased toward low complexity. Residues 227 to 260 (GRLPAGWERREDNLGRTYYVDHNTRTTTWTRPSS) form the WW 1 domain. A compositionally biased stretch (polar residues) spans 251 to 264 (RTTTWTRPSSNYNE). The span at 265-292 (HAQRSQREANMQLERRAHQSRMLPEDRT) shows a compositional bias: basic and acidic residues. Over residues 293–307 (GANSPNLPESSQQAH) the composition is skewed to polar residues. The segment covering 322 to 331 (ATGATTAGTG) has biased composition (low complexity). WW domains follow at residues 331 to 364 (GELP…DPRR) and 391 to 424 (GPLP…DPRL). In terms of domain architecture, HECT spans 480 to 813 (SASDLKKRLM…VEETLGFGQE (334 aa)). The active-site Glycyl thioester intermediate is Cys-781.

Belongs to the RSP5/NEDD4 family. As to quaternary structure, interacts with creD.

It localises to the cytoplasm. The catalysed reaction is S-ubiquitinyl-[E2 ubiquitin-conjugating enzyme]-L-cysteine + [acceptor protein]-L-lysine = [E2 ubiquitin-conjugating enzyme]-L-cysteine + N(6)-ubiquitinyl-[acceptor protein]-L-lysine.. Its pathway is protein modification; protein ubiquitination. In terms of biological role, E3 ubiquitin-protein ligase which accepts ubiquitin from an E2 ubiquitin-conjugating enzyme in the form of a thioester and then directly transfers the ubiquitin to targeted substrates. Probably involved in the regulatory network controlling carbon source utilization. The chain is Probable E3 ubiquitin-protein ligase hulA (hulA) from Aspergillus fumigatus (strain CBS 144.89 / FGSC A1163 / CEA10) (Neosartorya fumigata).